The sequence spans 210 residues: Thiamine-phosphate synthase (210 aa).

Residues 36–40 (QLRIK) and Asn68 each bind 4-amino-2-methyl-5-(diphosphooxymethyl)pyrimidine. Residues Asp69 and Asp88 each contribute to the Mg(2+) site. Ser107 serves as a coordination point for 4-amino-2-methyl-5-(diphosphooxymethyl)pyrimidine. 2-[(2R,5Z)-2-carboxy-4-methylthiazol-5(2H)-ylidene]ethyl phosphate is bound at residue 133–135 (TQT). Lys136 provides a ligand contact to 4-amino-2-methyl-5-(diphosphooxymethyl)pyrimidine. Residues Gly165 and 185 to 186 (VS) each bind 2-[(2R,5Z)-2-carboxy-4-methylthiazol-5(2H)-ylidene]ethyl phosphate.

This sequence belongs to the thiamine-phosphate synthase family. It depends on Mg(2+) as a cofactor.

It catalyses the reaction 2-[(2R,5Z)-2-carboxy-4-methylthiazol-5(2H)-ylidene]ethyl phosphate + 4-amino-2-methyl-5-(diphosphooxymethyl)pyrimidine + 2 H(+) = thiamine phosphate + CO2 + diphosphate. It carries out the reaction 2-(2-carboxy-4-methylthiazol-5-yl)ethyl phosphate + 4-amino-2-methyl-5-(diphosphooxymethyl)pyrimidine + 2 H(+) = thiamine phosphate + CO2 + diphosphate. The catalysed reaction is 4-methyl-5-(2-phosphooxyethyl)-thiazole + 4-amino-2-methyl-5-(diphosphooxymethyl)pyrimidine + H(+) = thiamine phosphate + diphosphate. It functions in the pathway cofactor biosynthesis; thiamine diphosphate biosynthesis; thiamine phosphate from 4-amino-2-methyl-5-diphosphomethylpyrimidine and 4-methyl-5-(2-phosphoethyl)-thiazole: step 1/1. Its function is as follows. Condenses 4-methyl-5-(beta-hydroxyethyl)thiazole monophosphate (THZ-P) and 2-methyl-4-amino-5-hydroxymethyl pyrimidine pyrophosphate (HMP-PP) to form thiamine monophosphate (TMP). The sequence is that of Thiamine-phosphate synthase from Cronobacter sakazakii (strain ATCC BAA-894) (Enterobacter sakazakii).